Consider the following 206-residue polypeptide: MGGKWSKSSVVGWPTVRERMRRAEPAADGVGAASRDLEKHGAITSSNTAATNAACAWLEAQEEEEVGFPVTPQVPLRPMTYKAAVDLSHFLKEKGGLEGLIHSQRRQDILDLWIYHTQGYFPDWQNYTPGPGVRYPLTFGWCYKLVPVEPDKVEEANKGENTSLLHPVSLHGMDDPEREVLEWRFDSRLAFHHVARELHPEYFKNC.

Gly2 is lipidated: N-myristoyl glycine; by host. Ser6 is modified (phosphoserine; by host). The segment at 62–65 is acidic; interacts with host PACS1 and PACS2; stabilizes the interaction of NEF/MHC-I with host AP1M1; necessary for MHC-I internalization; sequence EEEE. Residues 69-78 form an SH3-binding; interaction with Src family tyrosine kinases region; that stretch reads PVTPQVPLRP. The short motif at 72 to 75 is the PxxP; stabilizes the interaction of NEF/MHC-I with host AP1M1; necessary for MHC-I internalization element; sequence PQVP. Residues 108–124 are mediates dimerization, Nef-PTE1 interaction; that stretch reads DILDLWIYHTQGYFPDW. The segment at 108–124 is mediates dimerization, Nef-PTE1 interaction, Nef-induced CD4 and MHC-I down-regulation and enhancement of infectivity; that stretch reads DILDLWIYHTQGYFPDW. The tract at residues 148 to 180 is binding to ATP6V1H; that stretch reads VEPDKVEEANKGENTSLLHPVSLHGMDDPEREV. A Dileucine internalization motif; necessary for CD4 internalization motif is present at residues 164 to 165; that stretch reads LL. A Diacidic; necessary for CD4 internalization motif is present at residues 174-175; the sequence is DD.

Belongs to the lentivirus primate group Nef protein family. Monomer; cytosolic form. Homodimer; membrane bound form. Interacts with Nef associated p21-activated kinase (PAK2); this interaction activates PAK2. Associates with the Nef-MHC-I-AP1 complex; this complex is required for MHC-I internalization. Interacts (via C-terminus) with host PI3-kinase. Interacts with host PACS1; this interaction seems to be weak. Interacts with host PACS2. Interacts with host LCK and MAPK3; these interactions inhibit the kinase activity of the latter. Interacts with host ATP6V1H; this interaction may play a role in CD4 endocytosis. Associates with the CD4-Nef-AP2 complex; this complex is required for CD4 internalization. Interacts with host AP2 subunit alpha and AP2 subunit sigma2. Interacts with TCR-zeta chain; this interaction up-regulates the Fas ligand (FasL) surface expression. Interacts with host HCK, LYN, and SRC; these interactions activate the Src family kinases. Interacts with MAP3K5; this interaction inhibits the Fas and TNFR-mediated death signals. Interacts with beta-COP and PTE1. Interacts with human RACK1; this increases Nef phosphorylation by PKC. Interacts with TP53; this interaction decreases the half-life of TP53, protecting the infected cell against p53-mediated apoptosis. The virion-associated Nef proteins are cleaved by the viral protease to release the soluble C-terminal core protein. Nef is probably cleaved concomitantly with viral structural proteins on maturation of virus particles. Post-translationally, myristoylated. In terms of processing, phosphorylated on serine residues, probably by host PKCdelta and theta.

The protein localises to the host cell membrane. It localises to the virion. It is found in the secreted. Its subcellular location is the host Golgi apparatus membrane. In terms of biological role, factor of infectivity and pathogenicity, required for optimal virus replication. Alters numerous pathways of T-lymphocytes function and down-regulates immunity surface molecules in order to evade host defense and increase viral infectivity. Alters the functionality of other immunity cells, like dendritic cells, monocytes/macrophages and NK cells. In infected CD4(+) T-lymphocytes, down-regulates the surface MHC-I, mature MHC-II, CD4, CD28, CCR5 and CXCR4 molecules. Mediates internalization and degradation of host CD4 through the interaction of with the cytoplasmic tail of CD4, the recruitment of AP-2 (clathrin adapter protein complex 2), internalization through clathrin coated pits, and subsequent transport to endosomes and lysosomes for degradation. Diverts host MHC-I molecules to the trans-Golgi network-associated endosomal compartments by an endocytic pathway to finally target them for degradation. MHC-I down-regulation may involve AP-1 (clathrin adapter protein complex 1) or possibly Src family kinase-ZAP70/Syk-PI3K cascade recruited by PACS2. In consequence infected cells are masked for immune recognition by cytotoxic T-lymphocytes. Decreasing the number of immune receptors also prevents reinfection by more HIV particles (superinfection). Down-regulates host SERINC3 and SERINC5 thereby excluding these proteins from the viral particles. Virion infectivity is drastically higher when SERINC3 or SERINC5 are excluded from the viral envelope, because these host antiviral proteins impair the membrane fusion event necessary for subsequent virion penetration. Functionally, bypasses host T-cell signaling by inducing a transcriptional program nearly identical to that of anti-CD3 cell activation. Interaction with TCR-zeta chain up-regulates the Fas ligand (FasL). Increasing surface FasL molecules and decreasing surface MHC-I molecules on infected CD4(+) cells send attacking cytotoxic CD8+ T-lymphocytes into apoptosis. Its function is as follows. Plays a role in optimizing the host cell environment for viral replication without causing cell death by apoptosis. Protects the infected cells from apoptosis in order to keep them alive until the next virus generation is ready to strike. Inhibits the Fas and TNFR-mediated death signals by blocking MAP3K5/ASK1. Decreases the half-life of TP53, protecting the infected cell against p53-mediated apoptosis. Inhibits the apoptotic signals regulated by the Bcl-2 family proteins through the formation of a Nef/PI3-kinase/PAK2 complex that leads to activation of PAK2 and induces phosphorylation of host BAD. In terms of biological role, extracellular Nef protein targets CD4(+) T-lymphocytes for apoptosis by interacting with CXCR4 surface receptors. The protein is Protein Nef of Homo sapiens (Human).